The sequence spans 112 residues: UPF0102 protein CFF8240_0294 (112 aa).

Belongs to the UPF0102 family.

The protein is UPF0102 protein CFF8240_0294 of Campylobacter fetus subsp. fetus (strain 82-40).